We begin with the raw amino-acid sequence, 86 residues long: Apolipoprotein C-I (86 aa).

The first 26 residues, 1 to 26, serve as a signal peptide directing secretion; the sequence is MRLFLSLPVLVVALLTILEGPGPAQG.

This sequence belongs to the apolipoprotein C1 family.

The protein localises to the secreted. Inhibitor of lipoprotein binding to the low density lipoprotein (LDL) receptor, LDL receptor-related protein, and very low density lipoprotein (VLDL) receptor. Associates with high density lipoproteins (HDL) and the triacylglycerol-rich lipoproteins in the plasma and makes up about 10% of the protein of the VLDL and 2% of that of HDL. Appears to interfere directly with fatty acid uptake and is also the major plasma inhibitor of cholesteryl ester transfer protein (CETP). Binds free fatty acids and reduces their intracellular esterification. Modulates the interaction of APOE with beta-migrating VLDL and inhibits binding of beta-VLDL to the LDL receptor-related protein. The chain is Apolipoprotein C-I (APOC1) from Plecturocebus moloch (Dusky titi monkey).